The primary structure comprises 229 residues: Small ribosomal subunit protein uS3c (229 aa).

The KH type-2 domain occupies 39–128 (LRDNLFKQYP…RIILTILKVQ (90 aa)).

The protein belongs to the universal ribosomal protein uS3 family. As to quaternary structure, part of the 30S ribosomal subunit.

The protein localises to the plastid. Its subcellular location is the chloroplast. The chain is Small ribosomal subunit protein uS3c (rps3) from Tupiella akineta (Green alga).